A 552-amino-acid chain; its full sequence is CTP synthase (552 aa).

Residues 1-270 are amidoligase domain; sequence MTKYVFVTGG…DRIICEELKL (270 aa). Ser-13 contacts CTP. Ser-13 lines the UTP pocket. ATP-binding positions include 14–19 and Asp-71; that span reads SLGKGI. Residues Asp-71 and Glu-144 each contribute to the Mg(2+) site. CTP contacts are provided by residues 151–153, 191–196, and Lys-227; these read DIE and KTKPTQ. UTP-binding positions include 191 to 196 and Lys-227; that span reads KTKPTQ. The Glutamine amidotransferase type-1 domain occupies 295–547; that stretch reads TIGMVGKYVD…VEAAFANKQA (253 aa). Gly-356 is an L-glutamine binding site. The Nucleophile; for glutamine hydrolysis role is filled by Cys-383. Residues 384-387, Glu-407, and Arg-473 each bind L-glutamine; that span reads LGMQ. Active-site residues include His-520 and Glu-522.

The protein belongs to the CTP synthase family. As to quaternary structure, homotetramer.

The enzyme catalyses UTP + L-glutamine + ATP + H2O = CTP + L-glutamate + ADP + phosphate + 2 H(+). The catalysed reaction is L-glutamine + H2O = L-glutamate + NH4(+). It catalyses the reaction UTP + NH4(+) + ATP = CTP + ADP + phosphate + 2 H(+). The protein operates within pyrimidine metabolism; CTP biosynthesis via de novo pathway; CTP from UDP: step 2/2. With respect to regulation, allosterically activated by GTP, when glutamine is the substrate; GTP has no effect on the reaction when ammonia is the substrate. The allosteric effector GTP functions by stabilizing the protein conformation that binds the tetrahedral intermediate(s) formed during glutamine hydrolysis. Inhibited by the product CTP, via allosteric rather than competitive inhibition. Functionally, catalyzes the ATP-dependent amination of UTP to CTP with either L-glutamine or ammonia as the source of nitrogen. Regulates intracellular CTP levels through interactions with the four ribonucleotide triphosphates. The chain is CTP synthase from Burkholderia ambifaria (strain ATCC BAA-244 / DSM 16087 / CCUG 44356 / LMG 19182 / AMMD) (Burkholderia cepacia (strain AMMD)).